We begin with the raw amino-acid sequence, 456 residues long: GTPase Der (456 aa).

EngA-type G domains lie at 3 to 167 (FTIA…PETE) and 185 to 360 (IRVA…AVWN). GTP is bound by residues 9–16 (GRPNVGKS), 56–60 (DTAGL), 119–122 (NKSE), 191–198 (GRPNAGKS), 238–242 (DTAGL), and 303–306 (NKWD). In terms of domain architecture, KH-like spans 361–445 (RRVPTAALNR…PVRITLREKA (85 aa)).

This sequence belongs to the TRAFAC class TrmE-Era-EngA-EngB-Septin-like GTPase superfamily. EngA (Der) GTPase family. Associates with the 50S ribosomal subunit.

In terms of biological role, GTPase that plays an essential role in the late steps of ribosome biogenesis. The polypeptide is GTPase Der (Bradyrhizobium sp. (strain BTAi1 / ATCC BAA-1182)).